A 525-amino-acid chain; its full sequence is GMP synthase [glutamine-hydrolyzing] (525 aa).

Residues Lys8–Asn207 form the Glutamine amidotransferase type-1 domain. Cys85 acts as the Nucleophile in catalysis. Catalysis depends on residues His181 and Glu183. One can recognise a GMPS ATP-PPase domain in the interval Trp208–Arg400. An ATP-binding site is contributed by Ser235–Ser241.

As to quaternary structure, homodimer.

The catalysed reaction is XMP + L-glutamine + ATP + H2O = GMP + L-glutamate + AMP + diphosphate + 2 H(+). It participates in purine metabolism; GMP biosynthesis; GMP from XMP (L-Gln route): step 1/1. Functionally, catalyzes the synthesis of GMP from XMP. The protein is GMP synthase [glutamine-hydrolyzing] of Shewanella halifaxensis (strain HAW-EB4).